Consider the following 328-residue polypeptide: Peroxidase 25 (328 aa).

Positions 1–26 (MGVYLGKYCYIMIIMLVLVLGKEVRS) are cleaved as a signal peptide. 4 cysteine pairs are disulfide-bonded: cysteine 38/cysteine 114, cysteine 71/cysteine 76, cysteine 120/cysteine 324, and cysteine 198/cysteine 230. Catalysis depends on histidine 69, which acts as the Proton acceptor. Residues aspartate 70, valine 73, glycine 75, aspartate 77, and serine 79 each coordinate Ca(2+). Residue proline 161 participates in substrate binding. Histidine 191 is a binding site for heme b. Threonine 192 serves as a coordination point for Ca(2+). A glycan (N-linked (GlcNAc...) asparagine) is linked at asparagine 207. Ca(2+) contacts are provided by aspartate 243, serine 246, and aspartate 251.

Belongs to the peroxidase family. Classical plant (class III) peroxidase subfamily. Requires heme b as cofactor. Ca(2+) is required as a cofactor.

It is found in the secreted. It catalyses the reaction 2 a phenolic donor + H2O2 = 2 a phenolic radical donor + 2 H2O. In terms of biological role, removal of H(2)O(2), oxidation of toxic reductants, biosynthesis and degradation of lignin, suberization, auxin catabolism, response to environmental stresses such as wounding, pathogen attack and oxidative stress. These functions might be dependent on each isozyme/isoform in each plant tissue. The chain is Peroxidase 25 (PER25) from Arabidopsis thaliana (Mouse-ear cress).